Here is an 880-residue protein sequence, read N- to C-terminus: Alanine--tRNA ligase (880 aa).

Positions 568, 572, 670, and 674 each coordinate Zn(2+).

This sequence belongs to the class-II aminoacyl-tRNA synthetase family. It depends on Zn(2+) as a cofactor.

The protein resides in the cytoplasm. It catalyses the reaction tRNA(Ala) + L-alanine + ATP = L-alanyl-tRNA(Ala) + AMP + diphosphate. In terms of biological role, catalyzes the attachment of alanine to tRNA(Ala) in a two-step reaction: alanine is first activated by ATP to form Ala-AMP and then transferred to the acceptor end of tRNA(Ala). Also edits incorrectly charged Ser-tRNA(Ala) and Gly-tRNA(Ala) via its editing domain. The sequence is that of Alanine--tRNA ligase from Ligilactobacillus salivarius (strain UCC118) (Lactobacillus salivarius).